Consider the following 425-residue polypeptide: Serine--tRNA ligase (425 aa).

Residue 228–230 (TSE) coordinates L-serine. Position 259–261 (259–261 (RSE)) interacts with ATP. Position 282 (glutamate 282) interacts with L-serine. 346-349 (EISS) provides a ligand contact to ATP. Position 384 (serine 384) interacts with L-serine.

Belongs to the class-II aminoacyl-tRNA synthetase family. Type-1 seryl-tRNA synthetase subfamily. Homodimer. The tRNA molecule binds across the dimer.

The protein resides in the cytoplasm. It carries out the reaction tRNA(Ser) + L-serine + ATP = L-seryl-tRNA(Ser) + AMP + diphosphate + H(+). It catalyses the reaction tRNA(Sec) + L-serine + ATP = L-seryl-tRNA(Sec) + AMP + diphosphate + H(+). It participates in aminoacyl-tRNA biosynthesis; selenocysteinyl-tRNA(Sec) biosynthesis; L-seryl-tRNA(Sec) from L-serine and tRNA(Sec): step 1/1. Its function is as follows. Catalyzes the attachment of serine to tRNA(Ser). Is also able to aminoacylate tRNA(Sec) with serine, to form the misacylated tRNA L-seryl-tRNA(Sec), which will be further converted into selenocysteinyl-tRNA(Sec). The sequence is that of Serine--tRNA ligase from Ehrlichia ruminantium (strain Gardel).